Reading from the N-terminus, the 1483-residue chain is Chromosome partition protein MukB (1483 aa).

34-41 (GGNGAGKS) provides a ligand contact to ATP. Coiled-coil stretches lie at residues 326–418 (LEAD…QYNQ), 444–480 (LETF…QAYQ), 509–601 (RHLA…MQRA), 780–804 (RAAC…FATL), 837–923 (EIRQ…AKLE), 977–1115 (EMLS…TAKA), and 1209–1265 (VEAI…LQNV). Positions 666–783 (PGGSEDQRLN…EVPLFGRAAC (118 aa)) are flexible hinge.

It belongs to the SMC family. MukB subfamily. Homodimerization via its hinge domain. Binds to DNA via its C-terminal region. Interacts, and probably forms a ternary complex, with MukE and MukF via its C-terminal region. The complex formation is stimulated by calcium or magnesium. Interacts with tubulin-related protein FtsZ.

The protein localises to the cytoplasm. It is found in the nucleoid. Plays a central role in chromosome condensation, segregation and cell cycle progression. Functions as a homodimer, which is essential for chromosome partition. Involved in negative DNA supercoiling in vivo, and by this means organize and compact chromosomes. May achieve or facilitate chromosome segregation by condensation DNA from both sides of a centrally located replisome during cell division. The chain is Chromosome partition protein MukB from Shigella dysenteriae serotype 1 (strain Sd197).